Reading from the N-terminus, the 458-residue chain is UDP-N-acetylmuramate--L-alanine ligase (458 aa).

Residue 118-124 coordinates ATP; that stretch reads GTHGKTT.

The protein belongs to the MurCDEF family.

It is found in the cytoplasm. It carries out the reaction UDP-N-acetyl-alpha-D-muramate + L-alanine + ATP = UDP-N-acetyl-alpha-D-muramoyl-L-alanine + ADP + phosphate + H(+). The protein operates within cell wall biogenesis; peptidoglycan biosynthesis. Its function is as follows. Cell wall formation. The chain is UDP-N-acetylmuramate--L-alanine ligase from Clostridium botulinum (strain Okra / Type B1).